Consider the following 656-residue polypeptide: Protein NO VEIN-LIKE (656 aa).

The segment at Asp-283–Ala-375 is disordered. The span at Glu-299 to Val-308 shows a compositional bias: acidic residues. The span at Glu-342–Lys-353 shows a compositional bias: basic and acidic residues. Residues Leu-354–Ile-371 show a composition bias toward basic residues.

The polypeptide is Protein NO VEIN-LIKE (Arabidopsis thaliana (Mouse-ear cress)).